The chain runs to 158 residues: Transcription elongation factor GreA (158 aa).

Positions 3-75 (TEKTYPMTQE…TQLENMIRNA (73 aa)) form a coiled coil.

The protein belongs to the GreA/GreB family.

In terms of biological role, necessary for efficient RNA polymerase transcription elongation past template-encoded arresting sites. The arresting sites in DNA have the property of trapping a certain fraction of elongating RNA polymerases that pass through, resulting in locked ternary complexes. Cleavage of the nascent transcript by cleavage factors such as GreA or GreB allows the resumption of elongation from the new 3'terminus. GreA releases sequences of 2 to 3 nucleotides. The polypeptide is Transcription elongation factor GreA (Bacillus cereus (strain ATCC 14579 / DSM 31 / CCUG 7414 / JCM 2152 / NBRC 15305 / NCIMB 9373 / NCTC 2599 / NRRL B-3711)).